The chain runs to 291 residues: MQELRFVLIIVGALAIAALLFHGLWTSKKEGKSKFGDKPLRKMKVESDDPPSRAFAAEDDFEIIRKERKEPDFGIPNQQHDPLISDFAAHDELDEEEDEEARIPVQPQSQPQPRKVQPQVEMPRVAPNVPMAKVQPEVVTEIEVQEPQEEKLDVIVLNVHCAGNQPFIGTKLFDSMQQNGLLFGEMDIFHRHADLSGTGKVLFSVANMMQPGTLMHDDPADFSTKGISFFMTLPCFGDPEQNFKLMLKTAQQIADDLGGHVLDDARNLMTPNRLDAYRKQIQEFKVRAAQA.

Residues 1–5 (MQELR) lie on the Periplasmic side of the membrane. A helical membrane pass occupies residues 6-26 (FVLIIVGALAIAALLFHGLWT). Residues 27–291 (SKKEGKSKFG…QEFKVRAAQA (265 aa)) lie on the Cytoplasmic side of the membrane. Residues 29–51 (KEGKSKFGDKPLRKMKVESDDPP) show a composition bias toward basic and acidic residues. Disordered regions lie at residues 29 to 61 (KEGK…EDDF) and 92 to 119 (ELDE…VQPQ).

The protein belongs to the ZipA family. As to quaternary structure, interacts with FtsZ via their C-terminal domains.

The protein resides in the cell inner membrane. In terms of biological role, essential cell division protein that stabilizes the FtsZ protofilaments by cross-linking them and that serves as a cytoplasmic membrane anchor for the Z ring. Also required for the recruitment to the septal ring of downstream cell division proteins. This is Cell division protein ZipA from Vibrio cholerae serotype O1 (strain ATCC 39541 / Classical Ogawa 395 / O395).